The following is a 122-amino-acid chain: MIFGIGTDMIEINRVVKACERKTFLTKIYTEQEQKLLLSDIRKAASNFAVKEAVVKMFGTGFRAIAPNEIEVLRDNLGKPYVNLYGNAEILAKEHNVERIHVSITNTKELVSAYVIGEIIRE.

Residues D8 and E52 each contribute to the Mg(2+) site.

It belongs to the P-Pant transferase superfamily. AcpS family. The cofactor is Mg(2+).

It is found in the cytoplasm. It catalyses the reaction apo-[ACP] + CoA = holo-[ACP] + adenosine 3',5'-bisphosphate + H(+). Its function is as follows. Transfers the 4'-phosphopantetheine moiety from coenzyme A to a Ser of acyl-carrier-protein. The chain is Holo-[acyl-carrier-protein] synthase from Lachnoclostridium phytofermentans (strain ATCC 700394 / DSM 18823 / ISDg) (Clostridium phytofermentans).